The chain runs to 286 residues: Hydroxysteroid 11-beta-dehydrogenase 1-like protein (286 aa).

The first 17 residues, 1–17 (MGIHIKRWCFIILVASA), serve as a signal peptide directing secretion. Residues 39–65 (GAST…TARR), 90–91 (DM), and 117–119 (NHI) contribute to the NADP(+) site. Ser168 serves as a coordination point for substrate. Catalysis depends on Tyr181, which acts as the Proton acceptor. NADP(+)-binding positions include 181 to 185 (YAASK) and 214 to 220 (GLIDTQS).

This sequence belongs to the short-chain dehydrogenases/reductases (SDR) family.

The protein resides in the secreted. It catalyses the reaction cortisone + NADPH + H(+) = cortisol + NADP(+). Functionally, unidirectional NADP(+)-dependent cortisol dehydrogenase (in vitro). The sequence is that of Hydroxysteroid 11-beta-dehydrogenase 1-like protein (hsd11b1l) from Xenopus tropicalis (Western clawed frog).